The following is a 958-amino-acid chain: Coiled-coil domain-containing protein 187 (958 aa).

The span at 116–132 shows a compositional bias: low complexity; that stretch reads SSVSSGRMSGSSGGHES. Disordered regions lie at residues 116–160, 345–447, 470–492, and 510–602; these read SSVS…SDPR, ELTR…PRFF, QDIS…QRPW, and EPSP…KAQA. 2 stretches are compositionally biased toward polar residues: residues 374–398 and 470–491; these read LQST…NSSL and QDIS…SQRP. Low complexity predominate over residues 536–545; that stretch reads SSPSSKGKSA. A coiled-coil region spans residues 718–743; it reads KQARLQALETMAEALRQRVDILTTKL. The tract at residues 916–958 is disordered; sequence EVKKEGLVTPWTTRSCGKGEPADRPWAGWSGGQGGLPWASSTA.

The polypeptide is Coiled-coil domain-containing protein 187 (Mus musculus (Mouse)).